A 456-amino-acid polypeptide reads, in one-letter code: Adenylosuccinate lyase (456 aa).

N(6)-(1,2-dicarboxyethyl)-AMP-binding positions include R15–Y16, N90–D92, and T122–S123. H171 functions as the Proton donor/acceptor in the catalytic mechanism. A N(6)-(1,2-dicarboxyethyl)-AMP-binding site is contributed by Q247. Catalysis depends on S295, which acts as the Proton donor/acceptor. Residues S296, K301–N303, N309, R335, and S340–R344 each bind N(6)-(1,2-dicarboxyethyl)-AMP.

It belongs to the lyase 1 family. Adenylosuccinate lyase subfamily. As to quaternary structure, homotetramer. Residues from neighboring subunits contribute catalytic and substrate-binding residues to each active site.

The enzyme catalyses N(6)-(1,2-dicarboxyethyl)-AMP = fumarate + AMP. The catalysed reaction is (2S)-2-[5-amino-1-(5-phospho-beta-D-ribosyl)imidazole-4-carboxamido]succinate = 5-amino-1-(5-phospho-beta-D-ribosyl)imidazole-4-carboxamide + fumarate. It functions in the pathway purine metabolism; AMP biosynthesis via de novo pathway; AMP from IMP: step 2/2. Its pathway is purine metabolism; IMP biosynthesis via de novo pathway; 5-amino-1-(5-phospho-D-ribosyl)imidazole-4-carboxamide from 5-amino-1-(5-phospho-D-ribosyl)imidazole-4-carboxylate: step 2/2. In terms of biological role, catalyzes two reactions in de novo purine nucleotide biosynthesis. Catalyzes the breakdown of 5-aminoimidazole- (N-succinylocarboxamide) ribotide (SAICAR or 2-[5-amino-1-(5-phospho-beta-D-ribosyl)imidazole-4-carboxamido]succinate) to 5-aminoimidazole-4-carboxamide ribotide (AICAR or 5-amino-1-(5-phospho-beta-D-ribosyl)imidazole-4-carboxamide) and fumarate, and of adenylosuccinate (ADS or N(6)-(1,2-dicarboxyethyl)-AMP) to adenosine monophosphate (AMP) and fumarate. The protein is Adenylosuccinate lyase (purB) of Buchnera aphidicola subsp. Acyrthosiphon pisum (strain APS) (Acyrthosiphon pisum symbiotic bacterium).